Reading from the N-terminus, the 279-residue chain is Universal stress protein MT2087 (279 aa).

The protein belongs to the universal stress protein A family.

The protein is Universal stress protein MT2087 of Mycobacterium tuberculosis (strain CDC 1551 / Oshkosh).